The primary structure comprises 630 residues: MTDTNHSSMRQHSLQSLAIAAIGVVFGDIGTSPLYSLKEAFSPAHGIPLTPSAILGVISLLFWAIILVVGIKYVLFVMRADNNGEGGVLALMALSLRPLNPKSRITGLMMALGIFGACMFYGDAVITPAISVMSAVEGLEVATPQLSHLVLPITIVILIALFWIQRHGTATVGKLFGPIMLLWFVTIAALGIYHIARAPMIVSAINPYYAFSFMSEHVLLAYVVLGSVVLVLTGAEALYADMGHFGAKPIRLAAYVLVMPSLVLNYFGQGALLLLDPKAIENPFFLLAPQWAALPLVVLSTVATVIASQAVISGAYSLTSQAIQLGYVPRMKILHTSELAIGQIYVPVVNWLLLFVILCIVIGFKSSDNLAAAYGIAVTATMVITTILAAVVMVKVWNWNKLLVAMIIGVFLVIDLGFFGANLLKVEQGGWLPLGIGALLFFLLMTWYKGRHIVKERTAADGIPLAPFLQGLLAHPPHRVSGTAIYLTGNDTLVPVSLLHNLKHNKVLHERTIFMTFVTRDIPYVKDHERVTVHDAGEGLYIVKAEYGFNETPDVKAVLEEVARQRGMTFELMDTSFFLARETVVPTHLPGMSIWRERVFAWMHQNAAKPTDFFAIPANRVVELGTKIEI.

12 helical membrane passes run 17–37 (LAIAAIGVVFGDIGTSPLYSL), 51–71 (PSAILGVISLLFWAIILVVGI), 105–125 (ITGLMMALGIFGACMFYGDAV), 144–164 (PQLSHLVLPITIVILIALFWI), 175–195 (LFGPIMLLWFVTIAALGIYHI), 218–238 (VLLAYVVLGSVVLVLTGAEAL), 255–275 (YVLVMPSLVLNYFGQGALLLL), 283–303 (PFFLLAPQWAALPLVVLSTVA), 344–364 (IYVPVVNWLLLFVILCIVIGF), 374–394 (YGIAVTATMVITTILAAVVMV), 402–422 (LLVAMIIGVFLVIDLGFFGAN), and 428–448 (QGGWLPLGIGALLFFLLMTWY).

The protein belongs to the HAK/KUP transporter (TC 2.A.72) family.

The protein localises to the cell inner membrane. The catalysed reaction is K(+)(in) + H(+)(in) = K(+)(out) + H(+)(out). Its function is as follows. Transport of potassium into the cell. Likely operates as a K(+):H(+) symporter. This is Probable potassium transport system protein Kup from Burkholderia mallei (strain NCTC 10247).